Consider the following 438-residue polypeptide: MERWQNIQNVVVVGLGITGLSVVKHLVKYQPQTHVRVIDTRELPPGKESLPESVELHSGSWNSQWLAEADLVVANPGIALATSEIQDVIQAGTPVVGDIELFGWAVNKPAVAITGSNGKSTVTDLTGVLAKAAGLNVGVGGNIGIPALDLLELDADLYVLELSSFQLETTSSLNLAAAAFLNLSEDHMDRYQGMADYRDAKLRIFNNAQYAIVNREDKETYPDHSMPLVTFGLDDQEFGVATIDGTEWLTDNGKPVLPSQDLTLVGRHNVANALVSLALLKQVGIDYNKSLEALKAYNGLTHRCQVVANKREIKWVNDSKATNVASTLAALSGLEYQGTLYLLVGGVGKGADFSELKPVLAQLDRVQLCCFGEDAAQFMPLHPSAKTFDTMRDIIESISAQLVSGDMVMLSPACASFDQFNNFMARGDAFTELAHEYA.

115-121 (GSNGKST) is an ATP binding site.

The protein belongs to the MurCDEF family.

It localises to the cytoplasm. It carries out the reaction UDP-N-acetyl-alpha-D-muramoyl-L-alanine + D-glutamate + ATP = UDP-N-acetyl-alpha-D-muramoyl-L-alanyl-D-glutamate + ADP + phosphate + H(+). It functions in the pathway cell wall biogenesis; peptidoglycan biosynthesis. Cell wall formation. Catalyzes the addition of glutamate to the nucleotide precursor UDP-N-acetylmuramoyl-L-alanine (UMA). In Vibrio atlanticus (strain LGP32) (Vibrio splendidus (strain Mel32)), this protein is UDP-N-acetylmuramoylalanine--D-glutamate ligase.